The primary structure comprises 67 residues: Large ribosomal subunit protein bL35 (67 aa).

It belongs to the bacterial ribosomal protein bL35 family.

The protein is Large ribosomal subunit protein bL35 of Gloeothece citriformis (strain PCC 7424) (Cyanothece sp. (strain PCC 7424)).